A 626-amino-acid polypeptide reads, in one-letter code: (+)-3-carene synthase 1, chloroplastic (626 aa).

The N-terminal 45 residues, M1 to A45, are a transit peptide targeting the chloroplast. The Mg(2+) site is built by D377, D381, and D529. The DDXXD motif motif lies at D377–D381.

It belongs to the terpene synthase family. Tpsd subfamily. The cofactor is Mg(2+). Mn(2+) serves as cofactor.

Its subcellular location is the plastid. It is found in the chloroplast. It carries out the reaction (2E)-geranyl diphosphate = (+)-car-3-ene + diphosphate. The enzyme catalyses (2E)-geranyl diphosphate = terpinolene + diphosphate. It participates in terpene metabolism; oleoresin biosynthesis. Its pathway is secondary metabolite biosynthesis; terpenoid biosynthesis. Its function is as follows. Monoterpene synthase (TPS) involved in the biosynthesis of monoterpene natural products included in conifer oleoresin secretions and volatile emissions; these compounds contribute to biotic and abiotic stress defense against herbivores and pathogens. Catalyzes the conversion of (2E)-geranyl diphosphate (GPP) to (+)-3-carene and, to a lower extent, to terpinolene. This is (+)-3-carene synthase 1, chloroplastic from Pinus banksiana (Jack pine).